A 201-amino-acid polypeptide reads, in one-letter code: ATP-dependent Clp protease proteolytic subunit (201 aa).

Catalysis depends on S98, which acts as the Nucleophile. Residue H123 is part of the active site.

Belongs to the peptidase S14 family. Fourteen ClpP subunits assemble into 2 heptameric rings which stack back to back to give a disk-like structure with a central cavity, resembling the structure of eukaryotic proteasomes.

The protein resides in the cytoplasm. It catalyses the reaction Hydrolysis of proteins to small peptides in the presence of ATP and magnesium. alpha-casein is the usual test substrate. In the absence of ATP, only oligopeptides shorter than five residues are hydrolyzed (such as succinyl-Leu-Tyr-|-NHMec, and Leu-Tyr-Leu-|-Tyr-Trp, in which cleavage of the -Tyr-|-Leu- and -Tyr-|-Trp bonds also occurs).. Cleaves peptides in various proteins in a process that requires ATP hydrolysis. Has a chymotrypsin-like activity. Plays a major role in the degradation of misfolded proteins. The protein is ATP-dependent Clp protease proteolytic subunit of Neorickettsia sennetsu (strain ATCC VR-367 / Miyayama) (Ehrlichia sennetsu).